Here is a 105-residue protein sequence, read N- to C-terminus: Urease subunit beta (105 aa).

This sequence belongs to the urease beta subunit family. As to quaternary structure, heterotrimer of UreA (gamma), UreB (beta) and UreC (alpha) subunits. Three heterotrimers associate to form the active enzyme.

The protein resides in the cytoplasm. It catalyses the reaction urea + 2 H2O + H(+) = hydrogencarbonate + 2 NH4(+). It participates in nitrogen metabolism; urea degradation; CO(2) and NH(3) from urea (urease route): step 1/1. This is Urease subunit beta from Pseudomonas putida (strain W619).